The primary structure comprises 396 residues: MVKNFLGSSVTSGSAGAEHGKTLQIPTLRWVRQSKTSIMALVICLGRIVKTALVTGGSGYFGELLSKQLLRQGTYVRVFDLNPPGFSHPNLEFLKGTILDRNAVRQALSGIDKVFHNVAQVPLAKEKDLFWSVNCGGTQIIVDESVATGIEKFVYTSSSAVFGAPKSNPVTEETEPNPAEDYGRAKLAGEIICKEAMQRDGLDVAIVRPRTVLGYGRQGVVQILFDWVERGLDIPVLGGGNNKYQFVHSDDLASACIAASNVKGFATYNIGAAEFGTMRELLQVVIKHAETGSRIKSIPMGPTALAANLASALGLSPLGPYHSLMYGRAMYFDISKAQKELGYAPRYSNSQMMIETYNWYQANRASLGKGGGSRHKAPVKQQLLALLPYALRLIPG.

This sequence belongs to the NAD(P)-dependent epimerase/dehydratase family. It depends on NAD(+) as a cofactor. NADP(+) serves as cofactor.

Functionally, putative nucleotide sugar epimerase/dehydrogenase. This is an uncharacterized protein from Sinorhizobium fredii (strain NBRC 101917 / NGR234).